The sequence spans 108 residues: Replication restart protein PriB (108 aa).

The SSB domain occupies 8–108 (IDNRFSVMGV…LHAEQIEFID (101 aa)).

It belongs to the PriB family. Homodimer. Interacts with PriA and DnaT. Component of the replication restart primosome. Primosome assembly occurs via a 'hand-off' mechanism. PriA binds to replication forks, subsequently PriB then DnaT bind; DnaT then displaces ssDNA to generate the helicase loading substrate.

In terms of biological role, involved in the restart of stalled replication forks, which reloads the replicative helicase on sites other than the origin of replication; the PriA-PriB pathway is the major replication restart pathway. During primosome assembly it facilitates complex formation between PriA and DnaT on DNA; stabilizes PriA on DNA. Stimulates the DNA unwinding activity of PriA helicase. The polypeptide is Replication restart protein PriB (Haemophilus influenzae (strain 86-028NP)).